An 892-amino-acid polypeptide reads, in one-letter code: Inner centromere protein B (892 aa).

8 disordered regions span residues 50–124 (AEPE…KRMT), 160–182 (EHER…EMKT), 255–286 (LVNE…SLVV), 305–470 (KRES…PPPH), 502–555 (KRNT…RRED), 569–687 (QLEE…RERE), 702–760 (ERAA…AAAA), and 797–819 (NYGM…KPIP). Residues 60–69 (SQKRRRKKRT) show a composition bias toward basic residues. Low complexity predominate over residues 90–99 (SANWSSSVRR). Residues 259 to 272 (QPLNLSNESATPTG) are compositionally biased toward polar residues. A compositionally biased stretch (basic and acidic residues) spans 305 to 315 (KRESMTREAVR). A compositionally biased stretch (basic residues) spans 316-326 (KSIRQSISKKK). Residues 332 to 343 (SSTSSQRSCHSS) show a composition bias toward low complexity. The segment covering 431 to 444 (RAVDELSDDERPSE) has biased composition (basic and acidic residues). Pro residues predominate over residues 455–470 (PSPPCPPSKIVKPPPH). Basic and acidic residues-rich tracts occupy residues 509–555 (PDPK…RRED), 569–602 (QLEE…EEKA), 609–687 (KKQE…RERE), and 702–754 (ERAA…KAKE). The interval 512–725 (KSEEKERQRL…EERKKREQQQ (214 aa)) is SAH. The tract at residues 802-876 (LNSDDSTDDE…RTSSAVWHSP (75 aa)) is IN box. 2 positions are modified to phosphoserine: Ser-869 and Ser-870.

Belongs to the INCENP family. As to quaternary structure, component of the CPC at least composed of survivin/birc5, incenp, cdca8/borealin and/or cdca9/dasra-A, and aurkb/aurora-B. Interacts (via C-terminus) with aurkb (via N-terminus and kinase domain). Interacts (via N-terminus) with birc5.1, birc5.2, cdca8 and cdca9. Interacts with mtus1.

The protein localises to the nucleus. Its subcellular location is the chromosome. It is found in the centromere. It localises to the cytoplasm. The protein resides in the cytoskeleton. The protein localises to the spindle. Its subcellular location is the midbody. It is found in the kinetochore. Functionally, component of the chromosomal passenger complex (CPC), a complex that acts as a key regulator of mitosis. The CPC complex has essential functions at the centromere in ensuring correct chromosome alignment and segregation and is required for chromatin-induced microtubule stabilization and spindle assembly. Acts as a scaffold regulating CPC localization and activity. The C-terminus associates with aurkb/aurora-B, the N-terminus associated with cdca8/borealin and/or cdca9/dasra-A tethers the CPC to the inner centromere, and the microtubule binding activity within the central SAH domain directs aurkb/aurora-B toward substrates near microtubules. Activates aurkb. This chain is Inner centromere protein B (incenp-b), found in Xenopus laevis (African clawed frog).